A 314-amino-acid chain; its full sequence is Galectin-12 (314 aa).

2 Galectin domains span residues 27-161 (YGTT…VGFL) and 190-314 (CSRA…CVHC).

The protein resides in the nucleus. Its function is as follows. Binds lactose. May participate in the apoptosis of adipocytes. The sequence is that of Galectin-12 (Lgals12) from Mus musculus (Mouse).